We begin with the raw amino-acid sequence, 316 residues long: ATP synthase gamma chain (316 aa).

Belongs to the ATPase gamma chain family. In terms of assembly, F-type ATPases have 2 components, CF(1) - the catalytic core - and CF(0) - the membrane proton channel. CF(1) has five subunits: alpha(3), beta(3), gamma(1), delta(1), epsilon(1). CF(0) has three main subunits: a, b and c.

It localises to the cellular thylakoid membrane. Produces ATP from ADP in the presence of a proton gradient across the membrane. The gamma chain is believed to be important in regulating ATPase activity and the flow of protons through the CF(0) complex. In Prochlorococcus marinus (strain NATL1A), this protein is ATP synthase gamma chain.